Consider the following 309-residue polypeptide: Tagatose-6-phosphate kinase (309 aa).

It belongs to the carbohydrate kinase PfkB family. LacC subfamily.

The enzyme catalyses D-tagatofuranose 6-phosphate + ATP = D-tagatofuranose 1,6-bisphosphate + ADP + H(+). Its pathway is carbohydrate metabolism; D-tagatose 6-phosphate degradation; D-glyceraldehyde 3-phosphate and glycerone phosphate from D-tagatose 6-phosphate: step 1/2. This Streptococcus pneumoniae (strain Hungary19A-6) protein is Tagatose-6-phosphate kinase.